We begin with the raw amino-acid sequence, 485 residues long: Membrane-bound lytic murein transglycosylase F (485 aa).

The signal sequence occupies residues 1 to 29 (MFAHTALRQRCAKWLLATGLFLLLGACVE). The tract at residues 30-267 (KPSTLERVKE…RLKDRYYGHV (238 aa)) is non-LT domain. The segment at 268 to 485 (DVLGYVGAYT…DKPADKSSPM (218 aa)) is LT domain. Residue Glu-314 is part of the active site. Residues 465–485 (EGNLHVPGVNKDKPADKSSPM) are disordered. Positions 474 to 485 (NKDKPADKSSPM) are enriched in basic and acidic residues.

It in the N-terminal section; belongs to the bacterial solute-binding protein 3 family. The protein in the C-terminal section; belongs to the transglycosylase Slt family.

It localises to the cell outer membrane. It carries out the reaction Exolytic cleavage of the (1-&gt;4)-beta-glycosidic linkage between N-acetylmuramic acid (MurNAc) and N-acetylglucosamine (GlcNAc) residues in peptidoglycan, from either the reducing or the non-reducing ends of the peptidoglycan chains, with concomitant formation of a 1,6-anhydrobond in the MurNAc residue.. Functionally, murein-degrading enzyme that degrades murein glycan strands and insoluble, high-molecular weight murein sacculi, with the concomitant formation of a 1,6-anhydromuramoyl product. Lytic transglycosylases (LTs) play an integral role in the metabolism of the peptidoglycan (PG) sacculus. Their lytic action creates space within the PG sacculus to allow for its expansion as well as for the insertion of various structures such as secretion systems and flagella. This is Membrane-bound lytic murein transglycosylase F from Pseudomonas putida (strain ATCC 47054 / DSM 6125 / CFBP 8728 / NCIMB 11950 / KT2440).